The following is a 526-amino-acid chain: Bifunctional purine biosynthesis protein PurH (526 aa).

One can recognise an MGS-like domain in the interval 1-147 (MSSIKRALIS…KNWKHVAIVT (147 aa)).

It belongs to the PurH family.

It carries out the reaction (6R)-10-formyltetrahydrofolate + 5-amino-1-(5-phospho-beta-D-ribosyl)imidazole-4-carboxamide = 5-formamido-1-(5-phospho-D-ribosyl)imidazole-4-carboxamide + (6S)-5,6,7,8-tetrahydrofolate. The catalysed reaction is IMP + H2O = 5-formamido-1-(5-phospho-D-ribosyl)imidazole-4-carboxamide. Its pathway is purine metabolism; IMP biosynthesis via de novo pathway; 5-formamido-1-(5-phospho-D-ribosyl)imidazole-4-carboxamide from 5-amino-1-(5-phospho-D-ribosyl)imidazole-4-carboxamide (10-formyl THF route): step 1/1. The protein operates within purine metabolism; IMP biosynthesis via de novo pathway; IMP from 5-formamido-1-(5-phospho-D-ribosyl)imidazole-4-carboxamide: step 1/1. This is Bifunctional purine biosynthesis protein PurH from Neisseria meningitidis serogroup B (strain ATCC BAA-335 / MC58).